A 508-amino-acid chain; its full sequence is Glycerol kinase (508 aa).

Thr-14 is an ADP binding site. ATP-binding residues include Thr-14, Thr-15, and Ser-16. A sn-glycerol 3-phosphate-binding site is contributed by Thr-14. Arg-18 is a binding site for ADP. 4 residues coordinate sn-glycerol 3-phosphate: Arg-84, Glu-85, Tyr-134, and Asp-247. Residues Arg-84, Glu-85, Tyr-134, Asp-247, and Gln-248 each contribute to the glycerol site. ADP-binding residues include Thr-269 and Gly-313. Positions 269, 313, 317, and 416 each coordinate ATP. An ADP-binding site is contributed by Gly-416.

The protein belongs to the FGGY kinase family.

The enzyme catalyses glycerol + ATP = sn-glycerol 3-phosphate + ADP + H(+). It functions in the pathway polyol metabolism; glycerol degradation via glycerol kinase pathway; sn-glycerol 3-phosphate from glycerol: step 1/1. With respect to regulation, inhibited by fructose 1,6-bisphosphate (FBP). Key enzyme in the regulation of glycerol uptake and metabolism. Catalyzes the phosphorylation of glycerol to yield sn-glycerol 3-phosphate. This Mycoplasmoides gallisepticum (strain R(low / passage 15 / clone 2)) (Mycoplasma gallisepticum) protein is Glycerol kinase.